We begin with the raw amino-acid sequence, 277 residues long: Thymidylate synthase (277 aa).

Residue arginine 21 coordinates dUMP. Residue histidine 51 participates in (6R)-5,10-methylene-5,6,7,8-tetrahydrofolate binding. 126 to 127 (RR) serves as a coordination point for dUMP. The Nucleophile role is filled by cysteine 159. DUMP is bound by residues 179 to 182 (RSGD), asparagine 190, and 220 to 222 (HLY). Aspartate 182 serves as a coordination point for (6R)-5,10-methylene-5,6,7,8-tetrahydrofolate. Alanine 276 lines the (6R)-5,10-methylene-5,6,7,8-tetrahydrofolate pocket.

This sequence belongs to the thymidylate synthase family. Bacterial-type ThyA subfamily. Homodimer.

It is found in the cytoplasm. It catalyses the reaction dUMP + (6R)-5,10-methylene-5,6,7,8-tetrahydrofolate = 7,8-dihydrofolate + dTMP. It functions in the pathway pyrimidine metabolism; dTTP biosynthesis. In terms of biological role, catalyzes the reductive methylation of 2'-deoxyuridine-5'-monophosphate (dUMP) to 2'-deoxythymidine-5'-monophosphate (dTMP) while utilizing 5,10-methylenetetrahydrofolate (mTHF) as the methyl donor and reductant in the reaction, yielding dihydrofolate (DHF) as a by-product. This enzymatic reaction provides an intracellular de novo source of dTMP, an essential precursor for DNA biosynthesis. The protein is Thymidylate synthase of Alcanivorax borkumensis (strain ATCC 700651 / DSM 11573 / NCIMB 13689 / SK2).